A 363-amino-acid chain; its full sequence is 3-isopropylmalate dehydrogenase (363 aa).

NAD(+) is bound at residue Gly-78 to Glu-91. Substrate is bound by residues Arg-99, Arg-109, Arg-138, and Asp-227. Mg(2+)-binding residues include Asp-227, Asp-251, and Asp-255. Gly-285 to Asn-297 contacts NAD(+).

The protein belongs to the isocitrate and isopropylmalate dehydrogenases family. LeuB type 1 subfamily. Homodimer. The cofactor is Mg(2+). It depends on Mn(2+) as a cofactor.

The protein localises to the cytoplasm. The enzyme catalyses (2R,3S)-3-isopropylmalate + NAD(+) = 4-methyl-2-oxopentanoate + CO2 + NADH. The protein operates within amino-acid biosynthesis; L-leucine biosynthesis; L-leucine from 3-methyl-2-oxobutanoate: step 3/4. Catalyzes the oxidation of 3-carboxy-2-hydroxy-4-methylpentanoate (3-isopropylmalate) to 3-carboxy-4-methyl-2-oxopentanoate. The product decarboxylates to 4-methyl-2 oxopentanoate. The protein is 3-isopropylmalate dehydrogenase of Photorhabdus laumondii subsp. laumondii (strain DSM 15139 / CIP 105565 / TT01) (Photorhabdus luminescens subsp. laumondii).